The chain runs to 345 residues: Dihydroorotate dehydrogenase (quinone) (345 aa).

FMN contacts are provided by residues 65 to 69 (AGLDK) and Thr89. Lys69 is a binding site for substrate. 114–118 (NRMGF) provides a ligand contact to substrate. FMN is bound by residues Asn146 and Asn179. Residue Asn179 coordinates substrate. Ser182 acts as the Nucleophile in catalysis. A substrate-binding site is contributed by Asn184. The FMN site is built by Lys224 and Thr252. Residue 253-254 (NT) participates in substrate binding. FMN-binding positions include Gly275, Gly304, and 325–326 (YT).

This sequence belongs to the dihydroorotate dehydrogenase family. Type 2 subfamily. Monomer. Requires FMN as cofactor.

The protein resides in the cell membrane. It carries out the reaction (S)-dihydroorotate + a quinone = orotate + a quinol. Its pathway is pyrimidine metabolism; UMP biosynthesis via de novo pathway; orotate from (S)-dihydroorotate (quinone route): step 1/1. Functionally, catalyzes the conversion of dihydroorotate to orotate with quinone as electron acceptor. The polypeptide is Dihydroorotate dehydrogenase (quinone) (Janthinobacterium sp. (strain Marseille) (Minibacterium massiliensis)).